The sequence spans 197 residues: Small ribosomal subunit protein uS10c (197 aa).

Residues 1 to 60 constitute a chloroplast transit peptide; the sequence is MATSSLSTIVFSPLALSNSSSFPNKPQVSNLSLHSSLSNLRRTLSHSSPSSSSSSNVRVF. The disordered stretch occupies residues 67 to 91; that stretch reads ESQETGPESYVEEGSETSALGIGAD.

Belongs to the universal ribosomal protein uS10 family. As to quaternary structure, part of the 30S ribosomal subunit.

Its subcellular location is the plastid. The protein localises to the chloroplast. The chain is Small ribosomal subunit protein uS10c (RPS10) from Mesembryanthemum crystallinum (Common ice plant).